We begin with the raw amino-acid sequence, 523 residues long: 2-isopropylmalate synthase (523 aa).

The 263-residue stretch at 5-267 (VIIFDTTLRD…ETGINAKEIH (263 aa)) folds into the Pyruvate carboxyltransferase domain. Positions 14, 202, 204, and 238 each coordinate Mn(2+). The regulatory domain stretch occupies residues 392–523 (ELQQLVVHSD…QQNKQEFGSV (132 aa)).

Belongs to the alpha-IPM synthase/homocitrate synthase family. LeuA type 1 subfamily. As to quaternary structure, homodimer. Mn(2+) is required as a cofactor.

Its subcellular location is the cytoplasm. The catalysed reaction is 3-methyl-2-oxobutanoate + acetyl-CoA + H2O = (2S)-2-isopropylmalate + CoA + H(+). It functions in the pathway amino-acid biosynthesis; L-leucine biosynthesis; L-leucine from 3-methyl-2-oxobutanoate: step 1/4. In terms of biological role, catalyzes the condensation of the acetyl group of acetyl-CoA with 3-methyl-2-oxobutanoate (2-ketoisovalerate) to form 3-carboxy-3-hydroxy-4-methylpentanoate (2-isopropylmalate). This is 2-isopropylmalate synthase from Shewanella halifaxensis (strain HAW-EB4).